Reading from the N-terminus, the 88-residue chain is Small ribosomal subunit protein bS20 (88 aa).

A compositionally biased stretch (basic and acidic residues) spans Met1 to Arg17. Positions Met1–Lys25 are disordered.

It belongs to the bacterial ribosomal protein bS20 family.

Its function is as follows. Binds directly to 16S ribosomal RNA. This is Small ribosomal subunit protein bS20 from Mycoplasma genitalium (strain ATCC 33530 / DSM 19775 / NCTC 10195 / G37) (Mycoplasmoides genitalium).